The sequence spans 93 residues: Stromal cell-derived factor 1 (93 aa).

A signal peptide spans 1–21 (MNAKVVVVLVLVLTALCLSDG). The short motif at 22 to 23 (KP) is the Receptor activation motif element. The receptor and heparin binding stretch occupies residues 29 to 33 (RCPCR). Cystine bridges form between cysteine 30–cysteine 55 and cysteine 32–cysteine 71. Receptor binding stretches follow at residues 39 to 41 (VAR), 48 to 50 (KIL), and 60 to 70 (VARLKNNNRQV). Residues 41–51 (RANVKHLKILN), arginine 62, glutamine 69, and lysine 85 contribute to the heparin site.

Belongs to the intercrine alpha (chemokine CxC) family. As to quaternary structure, monomer or homodimer; in equilibrium. Dimer formation is induced by non acidic pH and the presence of multivalent anions, and by binding to CXCR4 or heparin. Monomeric form is required for full chemotactic activity and resistance to ischemia/reperfusion injury, whereas the dimeric form acts as a partial agonist of CXCR4, stimulating Ca2+ mobilization but with no chemotactic activity and instead acts as a selective antagonist that blocks chemotaxis induced by the monomeric form. Interacts with the N-terminus of ACKR3. Interacts with integrin subunit ITGB3 (via the allosteric site (site 2)). Interacts with TNFAIP6 (via Link domain). (Microbial infection) Interacts with molluscum contagiosum virus protein MC148. Processed forms SDF-1-beta(3-72) and SDF-1-alpha(3-67) are produced after secretion by proteolytic cleavage of isoforms Beta and Alpha, respectively. The N-terminal processing is probably achieved by DPP4. Isoform Alpha is first cleaved at the C-terminus to yield a SDF-1-alpha(1-67) intermediate before being processed at the N-terminus. The C-terminal processing of isoform Alpha is reduced by binding to heparin and, probably, cell surface proteoglycans. In terms of tissue distribution, isoform Alpha and isoform Beta are ubiquitously expressed, with highest levels detected in liver, pancreas and spleen. Isoform Gamma is mainly expressed in heart, with weak expression detected in several other tissues. Isoform Delta, isoform Epsilon and isoform Theta have highest expression levels in pancreas, with lower levels detected in heart, kidney, liver and spleen.

The protein localises to the secreted. Its function is as follows. Chemoattractant active on T-lymphocytes and monocytes but not neutrophils. Activates the C-X-C chemokine receptor CXCR4 to induce a rapid and transient rise in the level of intracellular calcium ions and chemotaxis. SDF-1-beta(3-72) and SDF-1-alpha(3-67) show a reduced chemotactic activity. Binding to cell surface proteoglycans seems to inhibit formation of SDF-1-alpha(3-67) and thus to preserve activity on local sites. Also binds to atypical chemokine receptor ACKR3, which activates the beta-arrestin pathway and acts as a scavenger receptor for SDF-1. Binds to the allosteric site (site 2) of integrins and activates integrins ITGAV:ITGB3, ITGA4:ITGB1 and ITGA5:ITGB1 in a CXCR4-independent manner. Acts as a positive regulator of monocyte migration and a negative regulator of monocyte adhesion via the LYN kinase. Stimulates migration of monocytes and T-lymphocytes through its receptors, CXCR4 and ACKR3, and decreases monocyte adherence to surfaces coated with ICAM-1, a ligand for beta-2 integrins. SDF1A/CXCR4 signaling axis inhibits beta-2 integrin LFA-1 mediated adhesion of monocytes to ICAM-1 through LYN kinase. Inhibits CXCR4-mediated infection by T-cell line-adapted HIV-1. Plays a protective role after myocardial infarction. Induces down-regulation and internalization of ACKR3 expressed in various cells. Has several critical functions during embryonic development; required for B-cell lymphopoiesis, myelopoiesis in bone marrow and heart ventricular septum formation. Stimulates the proliferation of bone marrow-derived B-cell progenitors in the presence of IL7 as well as growth of stromal cell-dependent pre-B-cells. This Homo sapiens (Human) protein is Stromal cell-derived factor 1 (CXCL12).